Consider the following 88-residue polypeptide: uncharacterized protein (88 aa).

Transmembrane regions (helical) follow at residues 27–46 (LFIF…ETPH) and 61–83 (SMCL…LILI).

It localises to the membrane. This is an uncharacterized protein from Saccharomyces cerevisiae (strain ATCC 204508 / S288c) (Baker's yeast).